Reading from the N-terminus, the 473-residue chain is Cysteine--tRNA ligase (473 aa).

Cysteine 30 lines the Zn(2+) pocket. A 'HIGH' region motif is present at residues 32-42 (MTVYDYCHIGH). The Zn(2+) site is built by cysteine 213, histidine 238, and glutamate 242. The 'KMSKS' region motif lies at 270–274 (KMSKS). Lysine 273 is a binding site for ATP.

The protein belongs to the class-I aminoacyl-tRNA synthetase family. As to quaternary structure, monomer. It depends on Zn(2+) as a cofactor.

Its subcellular location is the cytoplasm. It carries out the reaction tRNA(Cys) + L-cysteine + ATP = L-cysteinyl-tRNA(Cys) + AMP + diphosphate. This is Cysteine--tRNA ligase from Acinetobacter baumannii (strain ACICU).